The chain runs to 240 residues: tRNA (guanine-N(7)-)-methyltransferase (240 aa).

Residues 1–10 are compositionally biased toward polar residues; the sequence is MTESQDTPIT. The interval 1-20 is disordered; it reads MTESQDTPITTDGEARPHRR. Positions 70, 95, 122, and 145 each coordinate S-adenosyl-L-methionine. The active site involves Asp145. Residues Lys149, Asp181, and 218 to 221 contribute to the substrate site; that span reads TKFE.

Belongs to the class I-like SAM-binding methyltransferase superfamily. TrmB family.

It carries out the reaction guanosine(46) in tRNA + S-adenosyl-L-methionine = N(7)-methylguanosine(46) in tRNA + S-adenosyl-L-homocysteine. The protein operates within tRNA modification; N(7)-methylguanine-tRNA biosynthesis. Functionally, catalyzes the formation of N(7)-methylguanine at position 46 (m7G46) in tRNA. The sequence is that of tRNA (guanine-N(7)-)-methyltransferase from Pseudomonas putida (strain W619).